Here is a 614-residue protein sequence, read N- to C-terminus: Jacalin-related lectin 14 (614 aa).

Jacalin-type lectin domains are found at residues 27 to 169, 172 to 314, 317 to 462, and 468 to 611; these read VQKM…YFSW, PRKM…YFTT, PTKS…YFSP, and AEKL…HVVP.

It belongs to the jacalin lectin family.

This chain is Jacalin-related lectin 14 (JAL14), found in Arabidopsis thaliana (Mouse-ear cress).